The following is a 355-amino-acid chain: Elongation factor Ts (355 aa).

The involved in Mg(2+) ion dislocation from EF-Tu stretch occupies residues 82 to 85 (TDFV).

Belongs to the EF-Ts family.

It localises to the cytoplasm. Associates with the EF-Tu.GDP complex and induces the exchange of GDP to GTP. It remains bound to the aminoacyl-tRNA.EF-Tu.GTP complex up to the GTP hydrolysis stage on the ribosome. This Helicobacter acinonychis (strain Sheeba) protein is Elongation factor Ts.